We begin with the raw amino-acid sequence, 415 residues long: Coiled-coil domain-containing glutamate-rich protein 1 (415 aa).

Residues 1–11 (MTQTLDTKEDP) are compositionally biased toward basic and acidic residues. Disordered stretches follow at residues 1–20 (MTQT…GWAS), 29–64 (FGPR…QQYG), 133–162 (RPPG…SPPV), 202–241 (QEKL…GQED), and 255–372 (PSLV…PLEM). Basic residues-rich tracts occupy residues 31-46 (PRRR…RPRY) and 135-156 (PGRK…RRSA). Coiled coils occupy residues 197–224 (EDMR…STAS) and 264–366 (DEEK…EEEN). The segment covering 211–220 (ALRAQQAQAA) has biased composition (low complexity). Over residues 275 to 363 (VEEEEEGERE…EGLAEDEQTE (89 aa)) the composition is skewed to acidic residues.

The protein localises to the nucleus. Its function is as follows. Regulator of histone epigenetic modifications and chromatin compaction into the sperm head, required for histone-to-protamine (HTP) transition. HTP is a key event in which somatic histones are first replaced by testis-specific histone variants, then transition proteins (TNPs) are incorporated into the spermatid nucleus, and finally protamines (PRMs) replace the TNPs to promote chromatin condensation. The polypeptide is Coiled-coil domain-containing glutamate-rich protein 1 (CCER1) (Bos taurus (Bovine)).